We begin with the raw amino-acid sequence, 477 residues long: MQAKPTTAVKQKQNFGQRLFTLLRNRDFMISFLITVVLLVLFRVLAIIPLPGIQVNQTGLDQNSNDFFSLFNLLGGGGLNQLSLFAVGISPYISAQIVMQLLSTDLIPPLSKLVNSGEVGRRKIEMITRIITLPFALVQSFAVIQIATNSGGGSSPITLKNNGSDFVAFYIIAMTAGTYLSVFLGDTISKKGIGNGITLLILSGILAQLPEGFIAAYSVLSGVVVTINATLTTAISFFIYFMAFVTLLFATTFITQETRKIPIQQSGQGLVTESSALPYLPIKVNSAGVIPVIFASSIMSIPVTIAQFQPQTESRWFVEDYLSLSKPTGIVLYGILVILFSFFYSYIQINPERLAKNFEKSGRFIPGIRPGKDTEKHIARVLVRINFIGAPFLTVIAIIPYIVSALIHLPNSLSLGGTGIIIIVTAVVEFMSALRSAATATNYQQLRRNLAIEVQKTAQQDKEEQLRAETPGIGNLW.

The next 10 membrane-spanning stretches (helical) occupy residues 28–48, 67–89, 130–150, 165–185, 196–216, 234–254, 286–306, 329–349, 387–407, and 413–433; these read FMISFLITVVLLVLFRVLAII, FFSLFNLLGGGGLNQLSLFAVGI, IITLPFALVQSFAVIQIATNS, DFVAFYIIAMTAGTYLSVFLG, GITLLILSGILAQLPEGFIAA, AISFFIYFMAFVTLLFATTFI, SAGVIPVIFASSIMSIPVTIA, GIVLYGILVILFSFFYSYIQI, FIGAPFLTVIAIIPYIVSALI, and LSLGGTGIIIIVTAVVEFMSA.

It belongs to the SecY/SEC61-alpha family. As to quaternary structure, component of the Sec protein translocase complex. Heterotrimer consisting of SecY, SecE and SecG subunits. The heterotrimers can form oligomers, although 1 heterotrimer is thought to be able to translocate proteins. Interacts with the ribosome. Interacts with SecDF, and other proteins may be involved. Interacts with SecA.

The protein resides in the cell membrane. In terms of biological role, the central subunit of the protein translocation channel SecYEG. Consists of two halves formed by TMs 1-5 and 6-10. These two domains form a lateral gate at the front which open onto the bilayer between TMs 2 and 7, and are clamped together by SecE at the back. The channel is closed by both a pore ring composed of hydrophobic SecY resides and a short helix (helix 2A) on the extracellular side of the membrane which forms a plug. The plug probably moves laterally to allow the channel to open. The ring and the pore may move independently. The chain is Protein translocase subunit SecY from Mycoplasma pneumoniae (strain ATCC 29342 / M129 / Subtype 1) (Mycoplasmoides pneumoniae).